The primary structure comprises 176 residues: MKPVIDIAVEAEAWESFEDPATLAETVIVQTISQSGAKLAAEAEISIVFCDDAFIADLNRKWRGVDKPTNVLSFPSGGPIAVTPVLGDIVIAYETTEREAQEAGKPFRDHVAHLIAHGFLHLIGYDHLAAADAEAMEALERSVLARLGIDDPYQEPLASVEDGLAPVKGPLTSVKE.

Zn(2+) is bound by residues His117, His121, and His127.

This sequence belongs to the endoribonuclease YbeY family. The cofactor is Zn(2+).

Its subcellular location is the cytoplasm. Functionally, single strand-specific metallo-endoribonuclease involved in late-stage 70S ribosome quality control and in maturation of the 3' terminus of the 16S rRNA. In Methylocella silvestris (strain DSM 15510 / CIP 108128 / LMG 27833 / NCIMB 13906 / BL2), this protein is Endoribonuclease YbeY.